The primary structure comprises 356 residues: Arginine kinase Scy s 2 (356 aa).

Residues 9–91 (KLEEGFKKLE…FDPIIEDYHK (83 aa)) enclose the Phosphagen kinase N-terminal domain. Residue 64-68 (GVGVY) participates in L-arginine binding. Residues 119–356 (FVISTRVRCG…LELIKMEKEM (238 aa)) form the Phosphagen kinase C-terminal domain. Residues 122-126 (STRVR) and histidine 185 contribute to the ATP site. Glutamate 225 lines the L-arginine pocket. Residue arginine 229 participates in ATP binding. Cysteine 271 is an L-arginine binding site. Residues 280 to 284 (RASVH) and 309 to 314 (RGTRGE) each bind ATP. Glutamate 314 provides a ligand contact to L-arginine.

The protein belongs to the ATP:guanido phosphotransferase family. In terms of tissue distribution, muscle (at protein level).

It catalyses the reaction L-arginine + ATP = N(omega)-phospho-L-arginine + ADP + H(+). In terms of biological role, catalyzes the reversible transfer of high energy ATP gamma-phosphate group to L-arginine. The sequence is that of Arginine kinase Scy s 2 from Scylla serrata (Mud crab).